A 392-amino-acid polypeptide reads, in one-letter code: GDP-mannose transporter (392 aa).

Positions 1–11 are enriched in basic and acidic residues; sequence MDDKKNEDLEM. The tract at residues 1-25 is disordered; it reads MDDKKNEDLEMRNFNGRSSPSQRDP. The Cytoplasmic portion of the chain corresponds to 1–45; the sequence is MDDKKNEDLEMRNFNGRSSPSQRDPFLAKPGAAAKRGNSAFDLSN. Residues 46-66 form a helical membrane-spanning segment; that stretch reads VTNSPGISILAYCLASISMTV. Topologically, residues 67–76 are lumenal; the sequence is TNKYCVSGSN. The chain crosses the membrane as a helical span at residues 77 to 97; the sequence is WNLNFFYLAIQSVVCIIAIII. At 98 to 116 the chain is on the cytoplasmic side; that stretch reads CKQAGLITNLAPFDTKKAK. A helical membrane pass occupies residues 117–139; the sequence is TWFPISLLLVGMIYTSTKALQFL. Topologically, residues 140 to 142 are lumenal; sequence SVP. Residues 143-165 traverse the membrane as a helical segment; the sequence is VYTIFKNLTIIVIAYGEVLWFGG. The Cytoplasmic portion of the chain corresponds to 166–171; the sequence is SVTPSA. Residues 172–191 traverse the membrane as a helical segment; that stretch reads LFSFGLMVLSSVVAAWADIQ. Residues 192–210 lie on the Lumenal side of the membrane; the sequence is HALYGGGAAQSAEAAAALS. The chain crosses the membrane as a helical span at residues 211–231; it reads TLNAGYAWMGMNVFCTAAYVL. At 232–246 the chain is on the cytoplasmic side; the sequence is SMRKVIKKMNFKDWD. A helical transmembrane segment spans residues 247–267; it reads TMFYNNLLTIPVLFVCSFIFE. N-linked (GlcNAc...) asparagine glycans are attached at residues N268 and N273. Residues 268–285 lie on the Lumenal side of the membrane; that stretch reads NWSSENLTKNFPLETRNN. Residues 286–306 form a helical membrane-spanning segment; the sequence is LILGMIYSGLATIFISYCSAW. At 307-314 the chain is on the cytoplasmic side; sequence CIRVTSST. Residues 315 to 337 traverse the membrane as a helical segment; the sequence is TYSMVGALNKLPIAVSGLVFFAA. Residues 338–340 lie on the Lumenal side of the membrane; that stretch reads PVT. Residues 341 to 360 traverse the membrane as a helical segment; that stretch reads FGSVSAIFIGFVSGIVYAWA. Residues 361–392 lie on the Cytoplasmic side of the membrane; that stretch reads KVRQNQSKGNILPTTQPVMSASSQSNRDAAKA. Residues 373-392 are disordered; sequence PTTQPVMSASSQSNRDAAKA.

This sequence belongs to the TPT transporter family. SLC35D subfamily. Homooligomer.

The protein resides in the golgi apparatus membrane. It localises to the cytoplasmic vesicle membrane. Its subcellular location is the endoplasmic reticulum membrane. Its function is as follows. Involved in the import of GDP-mannose from the cytoplasm into the Golgi lumen. The sequence is that of GDP-mannose transporter (gmt1) from Botryotinia fuckeliana (strain B05.10) (Noble rot fungus).